Here is a 199-residue protein sequence, read N- to C-terminus: N-(5'-phosphoribosyl)anthranilate isomerase (199 aa).

This sequence belongs to the TrpF family.

The catalysed reaction is N-(5-phospho-beta-D-ribosyl)anthranilate = 1-(2-carboxyphenylamino)-1-deoxy-D-ribulose 5-phosphate. The protein operates within amino-acid biosynthesis; L-tryptophan biosynthesis; L-tryptophan from chorismate: step 3/5. The chain is N-(5'-phosphoribosyl)anthranilate isomerase from Streptococcus pneumoniae (strain ATCC BAA-255 / R6).